Consider the following 375-residue polypeptide: 4-hydroxy-3-methylbut-2-en-1-yl diphosphate synthase (flavodoxin) (375 aa).

Positions 270, 273, 305, and 312 each coordinate [4Fe-4S] cluster.

This sequence belongs to the IspG family. The cofactor is [4Fe-4S] cluster.

It carries out the reaction (2E)-4-hydroxy-3-methylbut-2-enyl diphosphate + oxidized [flavodoxin] + H2O + 2 H(+) = 2-C-methyl-D-erythritol 2,4-cyclic diphosphate + reduced [flavodoxin]. It participates in isoprenoid biosynthesis; isopentenyl diphosphate biosynthesis via DXP pathway; isopentenyl diphosphate from 1-deoxy-D-xylulose 5-phosphate: step 5/6. Functionally, converts 2C-methyl-D-erythritol 2,4-cyclodiphosphate (ME-2,4cPP) into 1-hydroxy-2-methyl-2-(E)-butenyl 4-diphosphate. This chain is 4-hydroxy-3-methylbut-2-en-1-yl diphosphate synthase (flavodoxin), found in Shigella flexneri serotype 5b (strain 8401).